Reading from the N-terminus, the 237-residue chain is Glucosamine-6-phosphate deaminase (237 aa).

Asp67 serves as the catalytic Proton acceptor; for enolization step. Asn136 serves as the catalytic For ring-opening step. His138 serves as the catalytic Proton acceptor; for ring-opening step. Glu143 acts as the For ring-opening step in catalysis.

The protein belongs to the glucosamine/galactosamine-6-phosphate isomerase family. NagB subfamily.

It carries out the reaction alpha-D-glucosamine 6-phosphate + H2O = beta-D-fructose 6-phosphate + NH4(+). It participates in amino-sugar metabolism; N-acetylneuraminate degradation; D-fructose 6-phosphate from N-acetylneuraminate: step 5/5. In terms of biological role, catalyzes the reversible isomerization-deamination of glucosamine 6-phosphate (GlcN6P) to form fructose 6-phosphate (Fru6P) and ammonium ion. This chain is Glucosamine-6-phosphate deaminase, found in Lysinibacillus sphaericus (strain C3-41).